A 170-amino-acid polypeptide reads, in one-letter code: Peptide deformylase (170 aa).

Fe cation-binding residues include Cys-91 and His-133. The active site involves Glu-134. His-137 provides a ligand contact to Fe cation.

The protein belongs to the polypeptide deformylase family. Fe(2+) serves as cofactor.

It carries out the reaction N-terminal N-formyl-L-methionyl-[peptide] + H2O = N-terminal L-methionyl-[peptide] + formate. In terms of biological role, removes the formyl group from the N-terminal Met of newly synthesized proteins. Requires at least a dipeptide for an efficient rate of reaction. N-terminal L-methionine is a prerequisite for activity but the enzyme has broad specificity at other positions. This Histophilus somni (strain 2336) (Haemophilus somnus) protein is Peptide deformylase.